A 397-amino-acid chain; its full sequence is GPI mannosyltransferase 1 (397 aa).

9 helical membrane-spanning segments follow: residues E5 to Y25, W79 to M99, L111 to T128, G156 to I176, L193 to I213, W257 to W277, Y307 to A327, I330 to L350, and L362 to L382.

This sequence belongs to the PIGM family.

The protein localises to the endoplasmic reticulum membrane. The protein operates within glycolipid biosynthesis; glycosylphosphatidylinositol-anchor biosynthesis. Its function is as follows. Mannosyltransferase involved in glycosylphosphatidylinositol-anchor biosynthesis. Transfers the first alpha-1,4-mannose to GlcN-acyl-PI during GPI precursor assembly. Required for cell wall integrity. This Eremothecium gossypii (strain ATCC 10895 / CBS 109.51 / FGSC 9923 / NRRL Y-1056) (Yeast) protein is GPI mannosyltransferase 1 (GPI14).